The sequence spans 168 residues: Photosystem I assembly protein Ycf3 (168 aa).

3 TPR repeats span residues 35–68, 72–105, and 120–153; these read AFTY…EIDP, SYIL…NPFL, and GEQA…TPGN.

This sequence belongs to the Ycf3 family.

The protein resides in the plastid. It is found in the chloroplast thylakoid membrane. Essential for the assembly of the photosystem I (PSI) complex. May act as a chaperone-like factor to guide the assembly of the PSI subunits. This Phaseolus vulgaris (Kidney bean) protein is Photosystem I assembly protein Ycf3.